The sequence spans 40 residues: Cytochrome b6-f complex subunit 5 (40 aa).

The helical transmembrane segment at 5 to 25 (ILLGMVLGFVPVTIAGLLVAA) threads the bilayer.

This sequence belongs to the PetG family. The 4 large subunits of the cytochrome b6-f complex are cytochrome b6, subunit IV (17 kDa polypeptide, PetD), cytochrome f and the Rieske protein, while the 4 small subunits are PetG, PetL, PetM and PetN. The complex functions as a dimer.

Its subcellular location is the cell inner membrane. Functionally, component of the cytochrome b6-f complex, which mediates electron transfer between photosystem II (PSII) and photosystem I (PSI), cyclic electron flow around PSI, and state transitions. PetG is required for either the stability or assembly of the cytochrome b6-f complex. The chain is Cytochrome b6-f complex subunit 5 from Gloeobacter violaceus (strain ATCC 29082 / PCC 7421).